A 1138-amino-acid chain; its full sequence is Lysylphosphatidylglycerol biosynthesis bifunctional protein LysX (1138 aa).

A compositionally biased stretch (polar residues) spans 1–15 (MALDTPSSDLPVSTD). Residues 1-34 (MALDTPSSDLPVSTDDTAEHQPTPAHRPPSAADR) are disordered. Positions 1 to 646 (MALDTPSSDL…LIAQLESEED (646 aa)) are phosphatidylglycerol lysyltransferase. Transmembrane regions (helical) follow at residues 56-76 (IAGT…IFPL), 92-112 (IVSL…VAIA), 119-139 (IAWW…ALLL), 155-175 (IQIW…IVTY), 190-210 (ALGV…GLVW), and 247-267 (IVID…AATV). The interval 647–1138 (RTAVEVHRPE…AFPMVKPTDA (492 aa)) is lysine--tRNA ligase. Positions 698-772 (VTIAGRVTKM…GELSVLIDAW (75 aa)) form a DNA-binding region, OB. Asp-1048 and Glu-1055 together coordinate Mg(2+).

It in the N-terminal section; belongs to the LPG synthetase family. In the C-terminal section; belongs to the class-II aminoacyl-tRNA synthetase family. It depends on Mg(2+) as a cofactor.

The protein localises to the cell membrane. The catalysed reaction is tRNA(Lys) + L-lysine + ATP = L-lysyl-tRNA(Lys) + AMP + diphosphate. It catalyses the reaction L-lysyl-tRNA(Lys) + a 1,2-diacyl-sn-glycero-3-phospho-(1'-sn-glycerol) = a 1,2-diacyl-sn-glycero-3-phospho-1'-(3'-O-L-lysyl)-sn-glycerol + tRNA(Lys). Catalyzes the production of L-lysyl-tRNA(Lys)transfer and the transfer of a lysyl group from L-lysyl-tRNA(Lys) to membrane-bound phosphatidylglycerol (PG), which produces lysylphosphatidylglycerol (LPG), one of the components of the bacterial membrane with a positive net charge. LPG synthesis contributes to the resistance to cationic antimicrobial peptides (CAMPs) and likely protects M.tuberculosis against the CAMPs produced by competiting microorganisms (bacteriocins). In fact, the modification of anionic phosphatidylglycerol with positively charged L-lysine results in repulsion of the peptides. The chain is Lysylphosphatidylglycerol biosynthesis bifunctional protein LysX (lysX) from Gordonia bronchialis (strain ATCC 25592 / DSM 43247 / BCRC 13721 / JCM 3198 / KCTC 3076 / NBRC 16047 / NCTC 10667) (Rhodococcus bronchialis).